The primary structure comprises 149 residues: Large ribosomal subunit protein bL9 (149 aa).

The protein belongs to the bacterial ribosomal protein bL9 family.

In terms of biological role, binds to the 23S rRNA. This chain is Large ribosomal subunit protein bL9, found in Vibrio cholerae serotype O1 (strain ATCC 39541 / Classical Ogawa 395 / O395).